A 284-amino-acid chain; its full sequence is Probable endonuclease 4 (284 aa).

9 residues coordinate Zn(2+): H69, H109, E145, D179, H182, H216, D229, H231, and E261.

The protein belongs to the AP endonuclease 2 family. Requires Zn(2+) as cofactor.

The enzyme catalyses Endonucleolytic cleavage to 5'-phosphooligonucleotide end-products.. Endonuclease IV plays a role in DNA repair. It cleaves phosphodiester bonds at apurinic or apyrimidinic (AP) sites, generating a 3'-hydroxyl group and a 5'-terminal sugar phosphate. The protein is Probable endonuclease 4 of Klebsiella pneumoniae (strain 342).